A 109-amino-acid polypeptide reads, in one-letter code: Sperm-specific class P protein 19 (109 aa).

The region spanning M1–A109 is the MSP domain.

Monomer. In terms of tissue distribution, expressed at higher level in testis.

This chain is Sperm-specific class P protein 19 (ssp-19), found in Caenorhabditis elegans.